A 271-amino-acid polypeptide reads, in one-letter code: Plasmanylethanolamine desaturase 1 (271 aa).

A run of 3 helical transmembrane segments spans residues 48–68 (WCCVVLCFSLIAHNMAHLLLL), 75–95 (PLVMLGMVAGALLADFLSGLV), and 162–182 (VLEQLYPWECFVFCLIIFGTF). Residues 187 to 191 (HKWSH) carry the Histidine box-1 motif. A Histidine box-2 motif is present at residues 214–218 (HHRIH).

It belongs to the fatty acid desaturase CarF family.

The protein localises to the endoplasmic reticulum membrane. The enzyme catalyses a 1-(1,2-saturated alkyl)-2-acyl-sn-glycero-3-phosphoethanolamine + 2 Fe(II)-[cytochrome b5] + O2 + 2 H(+) = a 1-O-(1Z-alkenyl)-2-acyl-sn-glycero-3-phosphoethanolamine + 2 Fe(III)-[cytochrome b5] + 2 H2O. It carries out the reaction a 1-O-hexadecyl-2-acyl-sn-glycero-3-phosphoethanolamine + 2 Fe(II)-[cytochrome b5] + O2 + 2 H(+) = a 1-O-(1Z-hexadecenyl)-2-acyl-sn-glycero-3-phosphoethanolamine + 2 Fe(III)-[cytochrome b5] + 2 H2O. It catalyses the reaction a 1-O-octadecyl-2-acyl-sn-glycero-3-phosphoethanolamine + 2 Fe(II)-[cytochrome b5] + O2 + 2 H(+) = a 1-O-(1Z-octadecenyl)-2-acyl-sn-glycero-3-phosphoethanolamine + 2 Fe(III)-[cytochrome b5] + 2 H2O. The catalysed reaction is a 1-O-(9Z-octadecenyl)-2-acyl-sn-glycero-3-phosphoethanolamine + 2 Fe(II)-[cytochrome b5] + O2 + 2 H(+) = a 1-O-(1Z,9Z-octadecadienyl)-2-acyl-sn-glycero-3-phosphoethanolamine + 2 Fe(III)-[cytochrome b5] + 2 H2O. It participates in lipid metabolism; fatty acid metabolism. In terms of biological role, plasmanylethanolamine desaturase involved in plasmalogen biogenesis in the endoplasmic reticulum membrane. Plasmalogens are glycerophospholipids with a hydrocarbon chain linked by a vinyl ether bond at the glycerol sn-1 position, and are involved in antioxidative and signaling mechanisms. The polypeptide is Plasmanylethanolamine desaturase 1 (Bos taurus (Bovine)).